The following is a 344-amino-acid chain: Glutamine synthetase (344 aa).

Positions 4–86 (YKLEYIWLDG…VMCEVMMPDG (83 aa)) constitute a GS beta-grasp domain. A GS catalytic domain is found at 89–344 (PHASNKRATI…SVPTEKKAVA (256 aa)). The Mg(2+) site is built by Glu109 and Glu111. Residue Glu167 coordinates ATP. The Mg(2+) site is built by Glu172 and Glu179. Glu278 contacts L-glutamate.

Belongs to the glutamine synthetase family. In terms of assembly, homooctamer and homotetramer. It depends on Mg(2+) as a cofactor.

It localises to the cytoplasm. The catalysed reaction is L-glutamate + NH4(+) + ATP = L-glutamine + ADP + phosphate + H(+). Its function is as follows. Catalyzes the ATP-dependent biosynthesis of glutamine from glutamate and ammonia. The chain is Glutamine synthetase from Bradyrhizobium diazoefficiens (strain JCM 10833 / BCRC 13528 / IAM 13628 / NBRC 14792 / USDA 110).